The following is a 233-amino-acid chain: Phosphoribosylformylglycinamidine synthase subunit PurQ (233 aa).

The Glutamine amidotransferase type-1 domain occupies 3 to 233 (SAVLVFPGIN…GLAQHLAKAA (231 aa)). Catalysis depends on cysteine 87, which acts as the Nucleophile. Catalysis depends on residues histidine 204 and glutamate 206.

In terms of assembly, part of the FGAM synthase complex composed of 1 PurL, 1 PurQ and 2 PurS subunits.

The protein localises to the cytoplasm. The enzyme catalyses N(2)-formyl-N(1)-(5-phospho-beta-D-ribosyl)glycinamide + L-glutamine + ATP + H2O = 2-formamido-N(1)-(5-O-phospho-beta-D-ribosyl)acetamidine + L-glutamate + ADP + phosphate + H(+). It catalyses the reaction L-glutamine + H2O = L-glutamate + NH4(+). It functions in the pathway purine metabolism; IMP biosynthesis via de novo pathway; 5-amino-1-(5-phospho-D-ribosyl)imidazole from N(2)-formyl-N(1)-(5-phospho-D-ribosyl)glycinamide: step 1/2. Its function is as follows. Part of the phosphoribosylformylglycinamidine synthase complex involved in the purines biosynthetic pathway. Catalyzes the ATP-dependent conversion of formylglycinamide ribonucleotide (FGAR) and glutamine to yield formylglycinamidine ribonucleotide (FGAM) and glutamate. The FGAM synthase complex is composed of three subunits. PurQ produces an ammonia molecule by converting glutamine to glutamate. PurL transfers the ammonia molecule to FGAR to form FGAM in an ATP-dependent manner. PurS interacts with PurQ and PurL and is thought to assist in the transfer of the ammonia molecule from PurQ to PurL. This Rhodopseudomonas palustris (strain ATCC BAA-98 / CGA009) protein is Phosphoribosylformylglycinamidine synthase subunit PurQ.